We begin with the raw amino-acid sequence, 141 residues long: HTH-type transcriptional regulator LrpA (141 aa).

Residues Val2–Ser63 enclose the HTH asnC-type domain. A DNA-binding region (H-T-H motif) is located at residues Phe21–Lys40.

As to quaternary structure, homooctamer; tetramer of dimers.

In terms of biological role, DNA-binding protein that negatively regulates its own transcription. Interferes with RNA polymerase (RNAP) recruitment by inhibiting the association of RNAP with the TBP-TFB promoter complex. The polypeptide is HTH-type transcriptional regulator LrpA (lrpA) (Pyrococcus abyssi (strain GE5 / Orsay)).